The chain runs to 282 residues: uncharacterized protein (282 aa).

Residues 5 to 140 form the N-acetyltransferase domain; that stretch reads DELIKLHEEH…SFQPYTKKLD (136 aa).

This sequence belongs to the acetyltransferase family.

This is an uncharacterized protein from Bacillus subtilis (strain 168).